Consider the following 320-residue polypeptide: Nucleotide-binding protein Pcryo_0127 (320 aa).

ATP is bound at residue 32–39; it reads GRSGSGKT. Residue 82–85 coordinates GTP; it reads DIRT.

Belongs to the RapZ-like family.

Functionally, displays ATPase and GTPase activities. This Psychrobacter cryohalolentis (strain ATCC BAA-1226 / DSM 17306 / VKM B-2378 / K5) protein is Nucleotide-binding protein Pcryo_0127.